We begin with the raw amino-acid sequence, 275 residues long: Ribosomal RNA small subunit methyltransferase A (275 aa).

Positions 21, 23, 48, 69, 94, and 115 each coordinate S-adenosyl-L-methionine.

The protein belongs to the class I-like SAM-binding methyltransferase superfamily. rRNA adenine N(6)-methyltransferase family. RsmA subfamily.

It localises to the cytoplasm. It carries out the reaction adenosine(1518)/adenosine(1519) in 16S rRNA + 4 S-adenosyl-L-methionine = N(6)-dimethyladenosine(1518)/N(6)-dimethyladenosine(1519) in 16S rRNA + 4 S-adenosyl-L-homocysteine + 4 H(+). Specifically dimethylates two adjacent adenosines (A1518 and A1519) in the loop of a conserved hairpin near the 3'-end of 16S rRNA in the 30S particle. May play a critical role in biogenesis of 30S subunits. The chain is Ribosomal RNA small subunit methyltransferase A from Clostridium botulinum (strain Langeland / NCTC 10281 / Type F).